The sequence spans 522 residues: Alanine aminotransferase 2 (522 aa).

Position 340 is an N6-(pyridoxal phosphate)lysine (lysine 340). Residues lysine 414, lysine 504, and lysine 511 each carry the N6-acetyllysine modification.

Belongs to the class-I pyridoxal-phosphate-dependent aminotransferase family. Alanine aminotransferase subfamily. Homodimer. The cofactor is pyridoxal 5'-phosphate. In terms of tissue distribution, specifically induced in fatty liver. Highly expressed in muscle, liver and white adipose tissue. Moderately expressed in brain and kidney and expressed at low levels in the heart.

It catalyses the reaction L-alanine + 2-oxoglutarate = pyruvate + L-glutamate. It participates in amino-acid degradation; L-alanine degradation via transaminase pathway; pyruvate from L-alanine: step 1/1. Functionally, catalyzes the reversible transamination between alanine and 2-oxoglutarate to form pyruvate and glutamate. The chain is Alanine aminotransferase 2 (Gpt2) from Mus musculus (Mouse).